We begin with the raw amino-acid sequence, 1311 residues long: DENN domain-containing protein 5B (1311 aa).

The 218-residue stretch at 53 to 270 (ATAAGENFDQ…EVPLPASGRS (218 aa)) folds into the uDENN domain. Residues 154-165 (QAEHNTSAQNCT) show a composition bias toward polar residues. Residues 154-201 (QAEHNTSAQNCTSSSSSSSSSSSSSSMDSLSSSLDDVDSPSAHGGRRT) are disordered. Positions 166–187 (SSSSSSSSSSSSSSMDSLSSSL) are enriched in low complexity. A cDENN domain is found at 289–452 (ELPLADFPLA…AVMSLQTSVL (164 aa)). Positions 454 to 619 (KELKSTSLRE…DNKIMSQWEE (166 aa)) constitute a dDENN domain. Residues 809–969 (LEENTLIASL…DYFCFTSVFT (161 aa)) enclose the RUN 1 domain. The segment at 854–874 (EQQLESPVSNGQERRKTESSV) is disordered. A helical transmembrane segment spans residues 962-982 (FCFTSVFTTIMIPYRAVIIPI). A PLAT domain is found at 973–1081 (IPYRAVIIPI…DDGSLERVLI (109 aa)). The RUN 2 domain occupies 1155–1306 (TVLLCGEGGL…FPITLETSLT (152 aa)).

Belongs to the RAB6IP1 family.

The protein resides in the membrane. Its function is as follows. Guanine nucleotide exchange factor (GEF) which may activate the small GTPases Rab. May promote the exchange of GDP to GTP, converting inactive GDP-bound Rab proteins into their active GTP-bound form. This is DENN domain-containing protein 5B (dennd5b) from Danio rerio (Zebrafish).